The chain runs to 320 residues: Olfactory receptor 5C1 (320 aa).

At Met1–Val29 the chain is on the extracellular side. Asn5 carries an N-linked (GlcNAc...) asparagine glycan. The helical transmembrane segment at Ala30–Ala50 threads the bilayer. Topologically, residues Leu51–Arg58 are cytoplasmic. A helical membrane pass occupies residues Leu59–Ser79. The Extracellular portion of the chain corresponds to Ala80 to Leu103. A disulfide bridge connects residues Cys101 and Cys193. A helical transmembrane segment spans residues Gln104–Tyr124. At Asp125 to Arg143 the chain is on the cytoplasmic side. The helical transmembrane segment at Leu144 to Thr164 threads the bilayer. Residues Thr165 to Glu200 lie on the Extracellular side of the membrane. Residues Leu201 to Ser221 traverse the membrane as a helical segment. The Cytoplasmic portion of the chain corresponds to Tyr222–Ala241. The helical transmembrane segment at Ala242 to Met262 threads the bilayer. Residues Tyr263–Asp275 are Extracellular-facing. The chain crosses the membrane as a helical span at residues Lys276–Leu296. At Arg297–Gln320 the chain is on the cytoplasmic side.

The protein belongs to the G-protein coupled receptor 1 family.

The protein localises to the cell membrane. Functionally, odorant receptor. This chain is Olfactory receptor 5C1 (OR5C1), found in Homo sapiens (Human).